The sequence spans 122 residues: Large ribosomal subunit protein uL14 (122 aa).

It belongs to the universal ribosomal protein uL14 family. As to quaternary structure, part of the 50S ribosomal subunit. Forms a cluster with proteins L3 and L19. In the 70S ribosome, L14 and L19 interact and together make contacts with the 16S rRNA in bridges B5 and B8.

Functionally, binds to 23S rRNA. Forms part of two intersubunit bridges in the 70S ribosome. The chain is Large ribosomal subunit protein uL14 from Rippkaea orientalis (strain PCC 8801 / RF-1) (Cyanothece sp. (strain PCC 8801)).